A 306-amino-acid chain; its full sequence is GTP-binding protein RAD (306 aa).

Positions 1–13 (MTLNGGSGAGGSR) are enriched in gly residues. The interval 1-91 (MTLNGGSGAG…GDSGSEDGVY (91 aa)) is disordered. At Arg-23 the chain carries Omega-N-methylarginine. Ser-25 carries the phosphoserine modification. The span at 56 to 88 (AATAAGTRTQGQRLDWPEGSSDSLSSGDSGSED) shows a compositional bias: low complexity. GTP-binding positions include 97–104 (GAPGVGKS) and 201–204 (NKSD). The tract at residues 276–295 (AKLFLGRIVARNSRKMAFLA) is calmodulin-binding.

This sequence belongs to the small GTPase superfamily. RGK family. In terms of assembly, interacts with Calmodulin preferentially in the inactive, GDP-bound form. Interacts with CAMK2D. Interacts with CACNB2; interaction may be involved in beta-adrenergic regulation of heart rate and contractile force. Interaction with CACNB2 regulates the trafficking of CACNA1C to the cell membrane.

It localises to the cell membrane. In terms of biological role, may regulate basal voltage-dependent L-type Ca(2+) currents and be required for beta-adrenergic augmentation of Ca(2+) influx in cardiomyocytes, thereby regulating increases in heart rate and contractile force. May play an important role in cardiac antiarrhythmia via the strong suppression of voltage-dependent L-type Ca(2+) currents. Regulates voltage-gated L-type calcium channel subunit alpha-1C trafficking to the cell membrane. Inhibits cardiac hypertrophy through the calmodulin-dependent kinase II (CaMKII) pathway. Inhibits phosphorylation and activation of CAMK2D. The chain is GTP-binding protein RAD (Rrad) from Rattus norvegicus (Rat).